A 457-amino-acid chain; its full sequence is DDB1- and CUL4-associated factor 10 (457 aa).

WD repeat units follow at residues 65–104, 108–146, 150–189, and 195–234; these read RTHGAVFNLEYSPDGSVLTLACEQTEVLLFDPLSSKHIKT, AHEDCVNNIRFLDNRMFATCSDDTTIALWDLRKLNSKAC, GHTSWVKNIEYDKNTRLLVTSGFDGNVIIWDTNRCTEDGC, and FHTRFLMRMRLTPDCSKMLISTSSGYLLILHELDLTKSLE. Positions 246 to 265 are enriched in low complexity; it reads TASTSDMTSTSSETRPSSSP. Residues 246–304 are disordered; it reads TASTSDMTSTSSETRPSSSPCHNSDSGPLFEKHMSRSSQREGTSPRNSLEVLTPEVPGE. The segment covering 281–292 has biased composition (polar residues); sequence RSSQREGTSPRN. 3 WD repeats span residues 306–346, 368–406, and 424–457; these read DRGN…QEGT, VGRGYIKELCFSPDGRMIASPHGYGIRLLGFDSQCKELV, and SHKDVVLTTKFSPTHCQIASGCLSGRVSLYQPKF.

It belongs to the WD repeat DCAF10 family.

It functions in the pathway protein modification; protein ubiquitination. May function as a substrate receptor for CUL4-DDB1 E3 ubiquitin-protein ligase complex. The polypeptide is DDB1- and CUL4-associated factor 10 (dcaf10) (Xenopus laevis (African clawed frog)).